The chain runs to 191 residues: D-glycero-beta-D-manno-heptose-1,7-bisphosphate 7-phosphatase (191 aa).

Aspartate 11 acts as the Nucleophile in catalysis. Mg(2+)-binding residues include aspartate 11 and aspartate 13. Substrate-binding positions include 11-13, 19-22, and 53-56; these read DRD, DHGY, and TNQS. The Proton donor role is filled by aspartate 13. Zn(2+) is bound by residues cysteine 92, histidine 94, cysteine 107, and cysteine 109. Substrate is bound at residue 110-111; it reads RK. Mg(2+) is bound by residues aspartate 136 and lysine 137. Lysine 137 is a binding site for substrate.

Belongs to the GmhB family. As to quaternary structure, monomer. It depends on Mg(2+) as a cofactor. Requires Zn(2+) as cofactor.

It localises to the cytoplasm. It carries out the reaction D-glycero-beta-D-manno-heptose 1,7-bisphosphate + H2O = D-glycero-beta-D-manno-heptose 1-phosphate + phosphate. The protein operates within nucleotide-sugar biosynthesis; ADP-L-glycero-beta-D-manno-heptose biosynthesis; ADP-L-glycero-beta-D-manno-heptose from D-glycero-beta-D-manno-heptose 7-phosphate: step 2/4. It participates in bacterial outer membrane biogenesis; LPS core biosynthesis. Functionally, converts the D-glycero-beta-D-manno-heptose 1,7-bisphosphate intermediate into D-glycero-beta-D-manno-heptose 1-phosphate by removing the phosphate group at the C-7 position. The protein is D-glycero-beta-D-manno-heptose-1,7-bisphosphate 7-phosphatase (gmhB) of Escherichia coli O157:H7.